The sequence spans 220 residues: ATP-dependent Clp protease proteolytic subunit (220 aa).

The active-site Nucleophile is serine 125. The active site involves histidine 150.

It belongs to the peptidase S14 family. In terms of assembly, fourteen ClpP subunits assemble into 2 heptameric rings which stack back to back to give a disk-like structure with a central cavity, resembling the structure of eukaryotic proteasomes.

It localises to the cytoplasm. It catalyses the reaction Hydrolysis of proteins to small peptides in the presence of ATP and magnesium. alpha-casein is the usual test substrate. In the absence of ATP, only oligopeptides shorter than five residues are hydrolyzed (such as succinyl-Leu-Tyr-|-NHMec, and Leu-Tyr-Leu-|-Tyr-Trp, in which cleavage of the -Tyr-|-Leu- and -Tyr-|-Trp bonds also occurs).. Cleaves peptides in various proteins in a process that requires ATP hydrolysis. Has a chymotrypsin-like activity. Plays a major role in the degradation of misfolded proteins. In Bacteroides fragilis (strain YCH46), this protein is ATP-dependent Clp protease proteolytic subunit.